An 85-amino-acid chain; its full sequence is Protein AC4 (85 aa).

A lipid anchor (N-myristoyl glycine; by host) is attached at G2.

The protein belongs to the geminiviridae protein AC4/C4 family. In terms of assembly, interacts with Arabidopsis thaliana ASK7/ASK-eta and ASK6/ASK-zeta proteins. In terms of processing, phosphorylated by Arabidopsis thaliana ASK7/ASK-eta mainly on threonine and serine residues.

The protein resides in the host cell membrane. Pathogenicity determinant. May act as a suppressor of RNA-mediated gene silencing, also known as post-transcriptional gene silencing (PTGS), a mechanism of plant viral defense that limits the accumulation of viral RNAs. May repress the AL61 promoter. This Solanum lycopersicum (Tomato) protein is Protein AC4.